A 1934-amino-acid chain; its full sequence is Myosin-7 (1934 aa).

The Myosin N-terminal SH3-like domain occupies 31–80; it reads DLKKDVFVPDDKEEFVKAKIVSREGGKVTAETENGKTVTVKEDQVMQQNP. A Myosin motor domain is found at 84-777; sequence DKIEDMAMLT…LLGLLEEMRD (694 aa). K128 is subject to N6,N6,N6-trimethyllysine. Residue 177–184 coordinates ATP; sequence GESGAGKT. T377 carries the phosphothreonine modification. 2 actin-binding regions span residues 654–676 and 756–770; these read LNKL…IPNE and KFGH…GLLG. The IQ domain occupies 780 to 809; it reads LSRIITRIQAQSRGLLSRMEFKKLLERRDS. Residues 839-1934 are a coiled coil; sequence LKSAETEKEM…DIGAKGLNEE (1096 aa). Phosphoserine occurs at positions 1136 and 1268. Position 1281 is a phosphothreonine (T1281). The residue at position 1307 (Y1307) is a Phosphotyrosine. A Phosphothreonine modification is found at T1308. S1509 is modified (phosphoserine). At T1512 the chain carries Phosphothreonine. The disordered stretch occupies residues 1914–1934; that stretch reads SQVNKLRAKSRDIGAKGLNEE. Over residues 1922–1934 the composition is skewed to basic and acidic residues; sequence KSRDIGAKGLNEE.

Belongs to the TRAFAC class myosin-kinesin ATPase superfamily. Myosin family. In terms of assembly, muscle myosin is a hexameric protein that consists of 2 heavy chain subunits (MHC), 2 alkali light chain subunits (MLC) and 2 regulatory light chain subunits (MLC-2). Interacts with ECPAS. Interacts (via C-terminus) with LRRC39.

Its subcellular location is the cytoplasm. The protein localises to the myofibril. The protein resides in the sarcomere. Its function is as follows. Myosins are actin-based motor molecules with ATPase activity essential for muscle contraction. Forms regular bipolar thick filaments that, together with actin thin filaments, constitute the fundamental contractile unit of skeletal and cardiac muscle. This is Myosin-7 (MYH7) from Mesocricetus auratus (Golden hamster).